The chain runs to 123 residues: Histone H2B 2 (123 aa).

Residues 1 to 32 (MAPPKPSAKGAKKAAKTVTKPKDGKKRRHARK) form a disordered region. The O-linked (GlcNAc) serine glycan is linked to Ser110. A Glycyl lysine isopeptide (Lys-Gly) (interchain with G-Cter in ubiquitin) cross-link involves residue Lys118.

The protein belongs to the histone H2B family. The nucleosome is a histone octamer containing two molecules each of H2A, H2B, H3 and H4 assembled in one H3-H4 heterotetramer and two H2A-H2B heterodimers. The octamer wraps approximately 147 bp of DNA. Post-translationally, monoubiquitination of Lys-118 gives a specific tag for epigenetic transcriptional activation and is also prerequisite for histone H3 'Lys-4' and 'Lys-79' methylation. In terms of processing, glcNAcylation at Ser-110 promotes monoubiquitination of Lys-118. It fluctuates in response to extracellular glucose, and associates with transcribed genes.

It localises to the nucleus. Its subcellular location is the chromosome. Core component of nucleosome. Nucleosomes wrap and compact DNA into chromatin, limiting DNA accessibility to the cellular machineries which require DNA as a template. Histones thereby play a central role in transcription regulation, DNA repair, DNA replication and chromosomal stability. DNA accessibility is regulated via a complex set of post-translational modifications of histones, also called histone code, and nucleosome remodeling. The polypeptide is Histone H2B 2 (his-4) (Caenorhabditis elegans).